The chain runs to 147 residues: Large ribosomal subunit protein uL15 (147 aa).

Residues 16–63 form a disordered region; the sequence is SSRARVGRGIGSGLGKTAGRGHKGSFARKGGGKIKPGFEGGQTPMQRR. The segment covering 23–33 has biased composition (gly residues); sequence RGIGSGLGKTA. Basic residues predominate over residues 34-47; the sequence is GRGHKGSFARKGGG.

Belongs to the universal ribosomal protein uL15 family. In terms of assembly, part of the 50S ribosomal subunit.

Binds to the 23S rRNA. This is Large ribosomal subunit protein uL15 from Xylella fastidiosa (strain Temecula1 / ATCC 700964).